A 227-amino-acid chain; its full sequence is Nucleoside triphosphate pyrophosphatase (227 aa).

The active-site Proton acceptor is Asp-77.

Belongs to the Maf family. A divalent metal cation serves as cofactor.

The protein resides in the cytoplasm. It catalyses the reaction a ribonucleoside 5'-triphosphate + H2O = a ribonucleoside 5'-phosphate + diphosphate + H(+). The catalysed reaction is a 2'-deoxyribonucleoside 5'-triphosphate + H2O = a 2'-deoxyribonucleoside 5'-phosphate + diphosphate + H(+). Functionally, nucleoside triphosphate pyrophosphatase. May have a dual role in cell division arrest and in preventing the incorporation of modified nucleotides into cellular nucleic acids. This chain is Nucleoside triphosphate pyrophosphatase, found in Rickettsia typhi (strain ATCC VR-144 / Wilmington).